Reading from the N-terminus, the 158-residue chain is Snaclec stejaggregin-A subunit alpha (158 aa).

The first 23 residues, 1–23, serve as a signal peptide directing secretion; that stretch reads MGRFISVSFGLLVVFLSLSGTGA. Intrachain disulfides connect cysteine 27–cysteine 38, cysteine 55–cysteine 152, and cysteine 127–cysteine 144. The 120-residue stretch at 34–153 folds into the C-type lectin domain; sequence YDWYCYKPFN…CQAKNPFVCK (120 aa).

Belongs to the snaclec family. As to quaternary structure, heteromultimer; disulfide-linked. As to expression, expressed by the venom gland.

Its subcellular location is the secreted. Interferes with one step of hemostasis (modulation of platelet aggregation, or coagulation cascade, for example). In Trimeresurus stejnegeri (Chinese green tree viper), this protein is Snaclec stejaggregin-A subunit alpha.